Here is a 288-residue protein sequence, read N- to C-terminus: Probable ketoamine kinase SAOUHSC_02908 (288 aa).

86-88 is an ATP binding site; the sequence is TYL. Asp-191 serves as the catalytic Proton acceptor.

Belongs to the fructosamine kinase family.

It catalyses the reaction N(6)-(D-ribulosyl)-L-lysine + ATP = N(6)-(3-O-phospho-D-ribulosyl)-L-lysine + ADP + H(+). The catalysed reaction is N(6)-(D-erythrulosyl)-L-lysine + ATP = N(6)-(3-O-phospho-D-erythrulosyl)-L-lysine + ADP + H(+). The enzyme catalyses N(6)-D-ribulosyl-L-lysyl-[protein] + ATP = N(6)-(3-O-phospho-D-ribulosyl)-L-lysyl-[protein] + ADP + H(+). It carries out the reaction N(6)-(D-erythrulosyl)-L-lysyl-[protein] + ATP = N(6)-(3-O-phospho-D-erythrulosyl)-L-lysyl-[protein] + ADP + H(+). Functionally, ketoamine kinase that phosphorylates ketoamines, such as erythruloselysine and ribuloselysine, on the third carbon of the sugar moiety to generate ketoamine 3-phosphate. Has higher activity on free lysine (erythruloselysine and ribuloselysine), than on ribuloselysine and erythruloselysine residues on glycated proteins. This Staphylococcus aureus (strain NCTC 8325 / PS 47) protein is Probable ketoamine kinase SAOUHSC_02908.